A 473-amino-acid polypeptide reads, in one-letter code: NAD-dependent protein deacetylase SRT1 (473 aa).

In terms of domain architecture, Deacetylase sirtuin-type spans S27–K267. NAD(+)-binding positions include G52–W71 and Q114–D117. H134 (proton acceptor) is an active-site residue. Zn(2+) contacts are provided by C142, C145, C167, and C172. Residues G209–S211, N235–Q237, and V253 each bind NAD(+). The disordered stretch occupies residues L447–A473. Residues S453–K465 are compositionally biased toward basic residues.

It belongs to the sirtuin family. Class IV subfamily. As to quaternary structure, binds to the promoter region of genes influenced by ethylene. Interacts with ENAP1; this interaction is enhanced in the presence of ethylene. Zn(2+) serves as cofactor.

Its subcellular location is the nucleus. The catalysed reaction is N(6)-acetyl-L-lysyl-[protein] + NAD(+) + H2O = 2''-O-acetyl-ADP-D-ribose + nicotinamide + L-lysyl-[protein]. In terms of biological role, NAD-dependent protein deacetylase. Has deacetylase activity towards H3K9Ac. May have a function in the safeguard against genome instability and DNA damage to ensure plant cell growth. Involved in responses to ethylene leading to the transcriptional repression of some ethylene-responsive genes via the regulation of histone acetylation H3K9Ac. This Arabidopsis thaliana (Mouse-ear cress) protein is NAD-dependent protein deacetylase SRT1.